The chain runs to 120 residues: Ribosome-binding factor A (120 aa).

Belongs to the RbfA family. In terms of assembly, monomer. Binds 30S ribosomal subunits, but not 50S ribosomal subunits or 70S ribosomes.

It localises to the cytoplasm. One of several proteins that assist in the late maturation steps of the functional core of the 30S ribosomal subunit. Associates with free 30S ribosomal subunits (but not with 30S subunits that are part of 70S ribosomes or polysomes). Required for efficient processing of 16S rRNA. May interact with the 5'-terminal helix region of 16S rRNA. The protein is Ribosome-binding factor A of Clostridium botulinum (strain ATCC 19397 / Type A).